The chain runs to 175 residues: Acetyl-CoA decarbonylase/synthase complex subunit epsilon 2 (175 aa).

It belongs to the CdhB family. In terms of assembly, heterotetramer of two alpha and two epsilon subunits. The ACDS complex is made up of alpha, epsilon, beta, gamma and delta subunits with a probable stoichiometry of (alpha(2)epsilon(2))(4)-beta(8)-(gamma(1)delta(1))(8).

Its function is as follows. Part of a complex that catalyzes the reversible cleavage of acetyl-CoA, allowing autotrophic growth from CO(2). The alpha-epsilon subcomponent functions as a carbon monoxide dehydrogenase. The precise role of the epsilon subunit is unclear; it may have a stabilizing role within the alpha(2)epsilon(2) component and/or be involved in electron transfer to FAD during a potential FAD-mediated CO oxidation. The chain is Acetyl-CoA decarbonylase/synthase complex subunit epsilon 2 (cdhB2) from Archaeoglobus fulgidus (strain ATCC 49558 / DSM 4304 / JCM 9628 / NBRC 100126 / VC-16).